A 509-amino-acid polypeptide reads, in one-letter code: ATP synthase subunit alpha (509 aa).

Position 169–176 (169–176 (GDRQTGKT)) interacts with ATP.

The protein belongs to the ATPase alpha/beta chains family. As to quaternary structure, F-type ATPases have 2 components, CF(1) - the catalytic core - and CF(0) - the membrane proton channel. CF(1) has five subunits: alpha(3), beta(3), gamma(1), delta(1), epsilon(1). CF(0) has four main subunits: a(1), b(1), b'(1) and c(9-12).

Its subcellular location is the cell inner membrane. The catalysed reaction is ATP + H2O + 4 H(+)(in) = ADP + phosphate + 5 H(+)(out). Produces ATP from ADP in the presence of a proton gradient across the membrane. The alpha chain is a regulatory subunit. The protein is ATP synthase subunit alpha of Bradyrhizobium sp. (strain ORS 278).